We begin with the raw amino-acid sequence, 291 residues long: 33 kDa chaperonin (291 aa).

2 disulfide bridges follow: Cys237/Cys239 and Cys270/Cys273.

The protein belongs to the HSP33 family. In terms of processing, under oxidizing conditions two disulfide bonds are formed involving the reactive cysteines. Under reducing conditions zinc is bound to the reactive cysteines and the protein is inactive.

The protein resides in the cytoplasm. Functionally, redox regulated molecular chaperone. Protects both thermally unfolding and oxidatively damaged proteins from irreversible aggregation. Plays an important role in the bacterial defense system toward oxidative stress. The polypeptide is 33 kDa chaperonin (Halalkalibacterium halodurans (strain ATCC BAA-125 / DSM 18197 / FERM 7344 / JCM 9153 / C-125) (Bacillus halodurans)).